The chain runs to 198 residues: Bcl-2-like protein 11 (198 aa).

The interval 1-72 is disordered; that stretch reads MAKQPSDVSS…PLAPPASPGP (72 aa). S69 bears the Phosphoserine; by MAPK mark. Phosphoserine is present on residues S77, S87, and S94. The short motif at 148–162 is the BH3 element; the sequence is IAQELRRIGDEFNAY.

The protein belongs to the Bcl-2 family. Forms heterodimers with a number of antiapoptotic Bcl-2 proteins, including MCL1, BCL2, BCL2L1 isoform Bcl-X(L), BCL2A1/BFL-1, BHRF1, and BCL2L2/BCLW. Does not heterodimerize with proapoptotic proteins such as BAD, BOK or BAK. Identified in a complex containing BCL2L11, DYNLL1 and BCL2L1 isoform Bcl-X(L); BH3 integrity is required for BCL2L1-binding. Interacts with YWHAZ. When phosphorylated, interacts with TRIM2; this interaction is associated with ubiquitination and degradation. Interacts with MCL1; may sequester BCL2L11 to prevent its pro-apoptotic activity. Interacts with GIMAP5. Interacts with BCL2L10/BCL-B. As to quaternary structure, interacts (when phosphorylated) with USP27X; the interaction leads to BCL2L11 deubiquitination and stabilization. Interacts with humanin; the interaction prevents BIM-induced apoptosis. In terms of assembly, does not interact with humanin. Interacts with BAX; the interaction may lead to BAX activation through conformational change. Does not interact with humanin. As to quaternary structure, interacts with BAX; the interaction may lead to BAX activation through conformational change. Post-translationally, phosphorylation at Ser-69 by MAPK1/MAPK3 leads to interaction with TRIM2 and polyubiquitination, followed by proteasomal degradation. Deubiquitination catalyzed by USP27X stabilizes the protein. In terms of processing, ubiquitination by TRIM2 following phosphorylation by MAPK1/MAPK3 leads to proteasomal degradation. Conversely, deubiquitination catalyzed by USP27X stabilizes the protein. In terms of tissue distribution, isoform BimEL, isoform BimL and isoform BimS are the predominant isoforms and are widely expressed with tissue-specific variation. Isoform Bim-gamma is most abundantly expressed in small intestine and colon, and in lower levels in spleen, prostate, testis, heart, liver and kidney.

The protein localises to the endomembrane system. It is found in the mitochondrion. Functionally, induces apoptosis and anoikis. Isoform BimL is more potent than isoform BimEL. Isoform Bim-alpha1, isoform Bim-alpha2 and isoform Bim-alpha3 induce apoptosis, although less potent than isoform BimEL, isoform BimL and isoform BimS. Isoform Bim-gamma induces apoptosis. Isoform Bim-alpha3 induces apoptosis possibly through a caspase-mediated pathway. Isoform BimAC and isoform BimABC lack the ability to induce apoptosis. In Homo sapiens (Human), this protein is Bcl-2-like protein 11 (BCL2L11).